Reading from the N-terminus, the 248-residue chain is Probable transcriptional regulatory protein Pfl01_4410 (248 aa).

It belongs to the TACO1 family.

It is found in the cytoplasm. The protein is Probable transcriptional regulatory protein Pfl01_4410 of Pseudomonas fluorescens (strain Pf0-1).